Here is a 347-residue protein sequence, read N- to C-terminus: Phenylalanine--tRNA ligase alpha subunit (347 aa).

Glu265 serves as a coordination point for Mg(2+).

Belongs to the class-II aminoacyl-tRNA synthetase family. Phe-tRNA synthetase alpha subunit type 1 subfamily. Tetramer of two alpha and two beta subunits. Requires Mg(2+) as cofactor.

It localises to the cytoplasm. It carries out the reaction tRNA(Phe) + L-phenylalanine + ATP = L-phenylalanyl-tRNA(Phe) + AMP + diphosphate + H(+). The protein is Phenylalanine--tRNA ligase alpha subunit of Mycolicibacterium vanbaalenii (strain DSM 7251 / JCM 13017 / BCRC 16820 / KCTC 9966 / NRRL B-24157 / PYR-1) (Mycobacterium vanbaalenii).